Reading from the N-terminus, the 506-residue chain is 2-isopropylmalate synthase (506 aa).

In terms of domain architecture, Pyruvate carboxyltransferase spans 4–266 (ILFMDTTLRD…EPSITLKEIK (263 aa)). Mn(2+)-binding residues include D13, H201, H203, and N237. The tract at residues 390-506 (NITQLQVHFV…KLKSFIQLVK (117 aa)) is regulatory domain.

It belongs to the alpha-IPM synthase/homocitrate synthase family. LeuA type 1 subfamily. Homodimer. Requires Mn(2+) as cofactor.

The protein localises to the cytoplasm. It carries out the reaction 3-methyl-2-oxobutanoate + acetyl-CoA + H2O = (2S)-2-isopropylmalate + CoA + H(+). It participates in amino-acid biosynthesis; L-leucine biosynthesis; L-leucine from 3-methyl-2-oxobutanoate: step 1/4. Catalyzes the condensation of the acetyl group of acetyl-CoA with 3-methyl-2-oxobutanoate (2-ketoisovalerate) to form 3-carboxy-3-hydroxy-4-methylpentanoate (2-isopropylmalate). In Bacillus thuringiensis subsp. konkukian (strain 97-27), this protein is 2-isopropylmalate synthase.